The following is a 244-amino-acid chain: tRNA pseudouridine synthase A (244 aa).

Asp52 (nucleophile) is an active-site residue. Residue Tyr110 participates in substrate binding.

The protein belongs to the tRNA pseudouridine synthase TruA family. In terms of assembly, homodimer.

It carries out the reaction uridine(38/39/40) in tRNA = pseudouridine(38/39/40) in tRNA. Functionally, formation of pseudouridine at positions 38, 39 and 40 in the anticodon stem and loop of transfer RNAs. This chain is tRNA pseudouridine synthase A, found in Clostridium kluyveri (strain ATCC 8527 / DSM 555 / NBRC 12016 / NCIMB 10680 / K1).